The chain runs to 99 residues: CTP synthase (99 aa).

Residues 1–99 (TMVTKLEKDS…FIKAIIENNK (99 aa)) form the Glutamine amidotransferase type-1 domain. R28 lines the L-glutamine pocket. Active-site residues include H73 and E75.

Belongs to the CTP synthase family. As to quaternary structure, homotetramer.

It catalyses the reaction UTP + L-glutamine + ATP + H2O = CTP + L-glutamate + ADP + phosphate + 2 H(+). The catalysed reaction is L-glutamine + H2O = L-glutamate + NH4(+). The enzyme catalyses UTP + NH4(+) + ATP = CTP + ADP + phosphate + 2 H(+). It participates in pyrimidine metabolism; CTP biosynthesis via de novo pathway; CTP from UDP: step 2/2. With respect to regulation, allosterically activated by GTP, when glutamine is the substrate; GTP has no effect on the reaction when ammonia is the substrate. The allosteric effector GTP functions by stabilizing the protein conformation that binds the tetrahedral intermediate(s) formed during glutamine hydrolysis. Inhibited by the product CTP, via allosteric rather than competitive inhibition. In terms of biological role, catalyzes the ATP-dependent amination of UTP to CTP with either L-glutamine or ammonia as the source of nitrogen. Regulates intracellular CTP levels through interactions with the four ribonucleotide triphosphates. The polypeptide is CTP synthase (Mycoplasma capricolum subsp. capripneumoniae).